A 932-amino-acid chain; its full sequence is Chaperone protein ClpC3, chloroplastic (932 aa).

The disordered stretch occupies residues 1 to 20; it reads MERTLLNPPPSLRSPACRTT. The transit peptide at 1–48 directs the protein to the chloroplast; it reads MERTLLNPPPSLRSPACRTTTATRIRPSSSMATMIPTPPPMRHARLVK. The Clp R domain occupies 99-240; that stretch reads FDMFTDKAIK…RSEVIRMISD (142 aa). Repeat stretches follow at residues 102–167 and 177–240; these read FTDK…AGRG and FTPA…MISD. Residues 264–511 are i; sequence LLEYGTNLTK…LVRLRNAQLP (248 aa). An ATP-binding site is contributed by 309-316; the sequence is GEPGVGKT. The UVR domain occupies 518–553; that stretch reads EKKLKKIMAEKSEAIRSQDFEKAGALRGEEVELKSE. Residues 579 to 770 are II; sequence VTEADVQHIV…LIIMTSNVGS (192 aa). Residue 653–660 coordinates ATP; it reads GPTGVGKS.

Belongs to the ClpA/ClpB family. ClpC subfamily.

It is found in the plastid. The protein localises to the chloroplast. In terms of biological role, molecular chaperone that may interact with a ClpP-like protease involved in degradation of denatured proteins in the chloroplast. The polypeptide is Chaperone protein ClpC3, chloroplastic (CLPC3) (Oryza sativa subsp. japonica (Rice)).